Here is a 59-residue protein sequence, read N- to C-terminus: Large ribosomal subunit protein bL32C (59 aa).

This sequence belongs to the bacterial ribosomal protein bL32 family.

This is Large ribosomal subunit protein bL32C (rpmF3) from Enterococcus faecalis (strain ATCC 700802 / V583).